Reading from the N-terminus, the 147-residue chain is 3-dehydroquinate dehydratase (147 aa).

The active-site Proton acceptor is the Tyr23. The substrate site is built by Asn74, His80, and Asp87. The active-site Proton donor is the His100. Residues 101 to 102 (LS) and Arg111 contribute to the substrate site.

This sequence belongs to the type-II 3-dehydroquinase family. Homododecamer.

It catalyses the reaction 3-dehydroquinate = 3-dehydroshikimate + H2O. It functions in the pathway metabolic intermediate biosynthesis; chorismate biosynthesis; chorismate from D-erythrose 4-phosphate and phosphoenolpyruvate: step 3/7. In terms of biological role, catalyzes a trans-dehydration via an enolate intermediate. This chain is 3-dehydroquinate dehydratase, found in Clostridium botulinum (strain ATCC 19397 / Type A).